The sequence spans 159 residues: 2-C-methyl-D-erythritol 2,4-cyclodiphosphate synthase (159 aa).

Residues Asp-8 and His-10 each contribute to the a divalent metal cation site. 4-CDP-2-C-methyl-D-erythritol 2-phosphate contacts are provided by residues 8–10 (DVH) and 34–35 (HS). His-42 provides a ligand contact to a divalent metal cation. 4-CDP-2-C-methyl-D-erythritol 2-phosphate contacts are provided by residues 56–58 (DIG), 61–65 (FPDTD), 100–106 (AQEPKMA), 132–135 (TTTE), Phe-139, and Arg-142.

Belongs to the IspF family. As to quaternary structure, homotrimer. A divalent metal cation serves as cofactor.

It catalyses the reaction 4-CDP-2-C-methyl-D-erythritol 2-phosphate = 2-C-methyl-D-erythritol 2,4-cyclic diphosphate + CMP. The protein operates within isoprenoid biosynthesis; isopentenyl diphosphate biosynthesis via DXP pathway; isopentenyl diphosphate from 1-deoxy-D-xylulose 5-phosphate: step 4/6. Involved in the biosynthesis of isopentenyl diphosphate (IPP) and dimethylallyl diphosphate (DMAPP), two major building blocks of isoprenoid compounds. Catalyzes the conversion of 4-diphosphocytidyl-2-C-methyl-D-erythritol 2-phosphate (CDP-ME2P) to 2-C-methyl-D-erythritol 2,4-cyclodiphosphate (ME-CPP) with a corresponding release of cytidine 5-monophosphate (CMP). The chain is 2-C-methyl-D-erythritol 2,4-cyclodiphosphate synthase from Alkaliphilus metalliredigens (strain QYMF).